The sequence spans 328 residues: 3-dehydroquinate synthase (328 aa).

The protein belongs to the archaeal-type DHQ synthase family.

The enzyme catalyses 2-amino-2,3,7-trideoxy-D-lyxo-hept-6-ulosonate + NAD(+) + H2O = 3-dehydroquinate + NH4(+) + NADH + H(+). In terms of biological role, catalyzes the oxidative deamination and cyclization of 2-amino-3,7-dideoxy-D-threo-hept-6-ulosonic acid (ADH) to yield 3-dehydroquinate (DHQ), which is fed into the canonical shikimic pathway of aromatic amino acid biosynthesis. The polypeptide is 3-dehydroquinate synthase (Methanoculleus marisnigri (strain ATCC 35101 / DSM 1498 / JR1)).